A 284-amino-acid chain; its full sequence is 1D-myo-inositol 2-acetamido-2-deoxy-alpha-D-glucopyranoside deacetylase (284 aa).

Zn(2+) is bound by residues H12, D15, and H146.

This sequence belongs to the MshB deacetylase family. It depends on Zn(2+) as a cofactor.

The catalysed reaction is 1D-myo-inositol 2-acetamido-2-deoxy-alpha-D-glucopyranoside + H2O = 1D-myo-inositol 2-amino-2-deoxy-alpha-D-glucopyranoside + acetate. Catalyzes the deacetylation of 1D-myo-inositol 2-acetamido-2-deoxy-alpha-D-glucopyranoside (GlcNAc-Ins) in the mycothiol biosynthesis pathway. In Mycolicibacterium gilvum (strain PYR-GCK) (Mycobacterium gilvum (strain PYR-GCK)), this protein is 1D-myo-inositol 2-acetamido-2-deoxy-alpha-D-glucopyranoside deacetylase.